The sequence spans 713 residues: Polyribonucleotide nucleotidyltransferase (713 aa).

The Mg(2+) site is built by aspartate 493 and aspartate 499. The KH domain occupies 560–619 (PRMITIKINPEKIRDVIGKGGSVIRALTEETGTTIDISDDGVVTIASTNSEGMAEAKKRI). Positions 629-697 (GHVYEGTVLK…EKGRVRLSAK (69 aa)) constitute an S1 motif domain.

It belongs to the polyribonucleotide nucleotidyltransferase family. Mg(2+) serves as cofactor.

Its subcellular location is the cytoplasm. The enzyme catalyses RNA(n+1) + phosphate = RNA(n) + a ribonucleoside 5'-diphosphate. Its function is as follows. Involved in mRNA degradation. Catalyzes the phosphorolysis of single-stranded polyribonucleotides processively in the 3'- to 5'-direction. The protein is Polyribonucleotide nucleotidyltransferase of Burkholderia pseudomallei (strain 1106a).